The following is a 574-amino-acid chain: Glucose-6-phosphate 1-dehydrogenase, chloroplastic (574 aa).

NADP(+) contacts are provided by residues 93–100 (GASGDLAK) and R127. An intrachain disulfide couples C145 to C153. An NADP(+)-binding site is contributed by K230. Residues K230, 260–264 (HYLGK), E298, and D317 each bind D-glucose 6-phosphate. Residue H322 is the Proton acceptor of the active site. K415 contacts NADP(+). D-glucose 6-phosphate-binding residues include K418 and K423. Positions 424, 428, and 457 each coordinate NADP(+). Q459 lines the D-glucose 6-phosphate pocket. NADP(+)-binding positions include 465-467 (YLK) and R550.

It belongs to the glucose-6-phosphate dehydrogenase family. As to quaternary structure, homodimer.

Its subcellular location is the plastid. The protein localises to the chloroplast. The enzyme catalyses D-glucose 6-phosphate + NADP(+) = 6-phospho-D-glucono-1,5-lactone + NADPH + H(+). The protein operates within carbohydrate degradation; pentose phosphate pathway; D-ribulose 5-phosphate from D-glucose 6-phosphate (oxidative stage): step 1/3. With respect to regulation, regulated by metabolites. Post-translationally inactivated by cysteine-mediated redox modification via the ferredoxin-thioredoxin system in the light and this avoids futile cycles with photosynthetic CO2 fixation. Catalyzes the rate-limiting step of the oxidative pentose-phosphate pathway, which represents a route for the dissimilation of carbohydrates besides glycolysis. The main function of this enzyme is to provide reducing power (NADPH) and pentose phosphates for fatty acid and nucleic acid synthesis which are involved in membrane synthesis and cell division. The sequence is that of Glucose-6-phosphate 1-dehydrogenase, chloroplastic (G6PD) from Spinacia oleracea (Spinach).